The following is a 468-amino-acid chain: Fibrinogen beta chain (468 aa).

Residue glutamine 1 is modified to Pyrrolidone carboxylic acid. Acidic residues predominate over residues 1-10; it reads QFPTDYDEGQ. A disordered region spans residues 1–54; sequence QFPTDYDEGQDDRPKVGLGARGHRPYDKKKEEAPSLRPVPPPISGGGYRARPAT. O-linked (GalNAc...) threonine glycosylation occurs at threonine 4. At tyrosine 6 the chain carries Sulfotyrosine. A compositionally biased stretch (basic and acidic residues) spans 24-34; the sequence is RPYDKKKEEAP. Positions 88-204 form a coiled coil; sequence KLQDTLVRQE…TQMEYCRTPC (117 aa). Cystine bridges form between cysteine 208-cysteine 293 and cysteine 218-cysteine 247. The 257-residue stretch at 209–465 folds into the Fibrinogen C-terminal domain; sequence NIPVVSGKEC…KMSMKIRPYF (257 aa). An N-linked (GlcNAc...) asparagine glycan is attached at asparagine 371. Cysteines 401 and 414 form a disulfide.

Heterohexamer; disulfide linked. Contains 2 sets of 3 non-identical chains (alpha, beta and gamma). The 2 heterotrimers are in head to head conformation with the N-termini in a small central domain. Post-translationally, conversion of fibrinogen to fibrin is triggered by thrombin, which cleaves fibrinopeptides A and B from alpha and beta chains, and thus exposes the N-terminal polymerization sites responsible for the formation of the soft clot. The soft clot is converted into the hard clot by factor XIIIA which catalyzes the epsilon-(gamma-glutamyl)lysine cross-linking between gamma chains (stronger) and between alpha chains (weaker) of different monomers. Detected in blood plasma (at protein level).

The protein localises to the secreted. In terms of biological role, cleaved by the protease thrombin to yield monomers which, together with fibrinogen alpha (FGA) and fibrinogen gamma (FGG), polymerize to form an insoluble fibrin matrix. Fibrin has a major function in hemostasis as one of the primary components of blood clots. In addition, functions during the early stages of wound repair to stabilize the lesion and guide cell migration during re-epithelialization. Was originally thought to be essential for platelet aggregation, based on in vitro studies using anticoagulated blood. However subsequent studies have shown that it is not absolutely required for thrombus formation in vivo. Enhances expression of SELP in activated platelets. Maternal fibrinogen is essential for successful pregnancy. Fibrin deposition is also associated with infection, where it protects against IFNG-mediated hemorrhage. May also facilitate the antibacterial immune response via both innate and T-cell mediated pathways. In Bos taurus (Bovine), this protein is Fibrinogen beta chain (FGB).